Here is a 462-residue protein sequence, read N- to C-terminus: Probable alcohol acetyltransferase crmB (462 aa).

Belongs to the alcohol acetyltransferase FCK4 family.

Its pathway is secondary metabolite biosynthesis. Probable alcohol acetyltransferase; part of the crm gene cluster that mediates the biosynthesis of a yet unidentified copper-responsive metabolite. In contrast to crmA, is not involved in the biosynthesis of fumivalines or fumicicolins. This chain is Probable alcohol acetyltransferase crmB, found in Aspergillus fumigatus (strain ATCC MYA-4609 / CBS 101355 / FGSC A1100 / Af293) (Neosartorya fumigata).